The following is a 164-amino-acid chain: 16S rRNA aminocarboxypropyltransferase (164 aa).

Positions 18, 66, 87, and 106 each coordinate S-adenosyl-L-methionine.

It belongs to the TDD superfamily. TSR3 family.

It localises to the cytoplasm. The catalysed reaction is an N(1)-methylpseudouridine in rRNA + S-adenosyl-L-methionine = N(1)-methyl-N(3)-[(3S)-3-amino-3-carboxypropyl]pseudouridine in rRNA + S-methyl-5'-thioadenosine + H(+). In terms of biological role, aminocarboxypropyltransferase that catalyzes the aminocarboxypropyl transfer on pseudouridine corresponding to position 914 in M.jannaschii 16S rRNA. It constitutes the last step in biosynthesis of the hypermodified N1-methyl-N3-(3-amino-3-carboxypropyl) pseudouridine (m1acp3-Psi). The chain is 16S rRNA aminocarboxypropyltransferase from Thermoplasma volcanium (strain ATCC 51530 / DSM 4299 / JCM 9571 / NBRC 15438 / GSS1).